The primary structure comprises 159 residues: Large ribosomal subunit protein bL17 (159 aa).

Residues 119-138 show a composition bias toward low complexity; sequence PVTPKAKPAKSTAKAAPKSK. Positions 119–159 are disordered; the sequence is PVTPKAKPAKSTAKAAPKSKAPVEETPDEPASEETAEAEAD. Over residues 143 to 159 the composition is skewed to acidic residues; that stretch reads ETPDEPASEETAEAEAD.

Belongs to the bacterial ribosomal protein bL17 family. As to quaternary structure, part of the 50S ribosomal subunit. Contacts protein L32.

This is Large ribosomal subunit protein bL17 from Leifsonia xyli subsp. xyli (strain CTCB07).